The chain runs to 500 residues: Dipeptide and tripeptide permease A (500 aa).

Over 1-21 (MSTANQKPTESVSLNAFKQPK) the chain is Cytoplasmic. A helical transmembrane segment spans residues 22–44 (AFYLIFSIELWERFGYYGLQGIM). Over 45 to 59 (AVYLVKQLGMSEADS) the chain is Periplasmic. The chain crosses the membrane as a helical span at residues 60–80 (ITLFSSFSALVYGLVAIGGWL). At 81–89 (GDKVLGTKR) the chain is on the cytoplasmic side. The chain crosses the membrane as a helical span at residues 90-110 (VIMLGAIVLAIGYALVAWSGH). Residue Asp111 is a topological domain, periplasmic. The chain crosses the membrane as a helical span at residues 112–132 (AGIVYMGMAAIAVGNGLFKAN). Residues 133–153 (PSSLLSTCYEKNDPRLDGAFT) lie on the Cytoplasmic side of the membrane. Residues 154–174 (MYYMSVNIGSFFSMIATPWLA) traverse the membrane as a helical segment. At 175–178 (AKYG) the chain is on the periplasmic side. Residues 179–199 (WSVAFALSVVGLLITIVNFAF) form a helical membrane-spanning segment. Over 200–219 (CQRWVKQYGSKPDFEPINYR) the chain is Cytoplasmic. The helical transmembrane segment at 220 to 240 (NLLLTIIGVVALIAIATWLLH) threads the bilayer. The Periplasmic portion of the chain corresponds to 241–246 (NQEVAR). Residues 247–267 (MALGVVAFGIVVIFGKEAFAM) traverse the membrane as a helical segment. Over 268 to 274 (KGAARRK) the chain is Cytoplasmic. A helical membrane pass occupies residues 275 to 295 (MIVAFILMLEAIIFFVLYSQM). Over 296–320 (PTSLNFFAIRNVEHSILGLAVEPEQ) the chain is Periplasmic. The chain crosses the membrane as a helical span at residues 321-341 (YQALNPFWIIIGSPILAAIYN). At 342–352 (KMGDTLPMPTK) the chain is on the cytoplasmic side. A helical membrane pass occupies residues 353-373 (FAIGMVMCSGAFLILPLGAKF). The Periplasmic segment spans residues 374–378 (ASDAG). The chain crosses the membrane as a helical span at residues 379–399 (IVSVSWLVASYGLQSIGELMI). The Cytoplasmic segment spans residues 400–414 (SGLGLAMVAQLVPQR). Residues 415–435 (LMGFIMGSWFLTTAGANLIGG) form a helical membrane-spanning segment. At 436-459 (YVAGMMAVPDNVTDPLMSLEVYGR) the chain is on the periplasmic side. The helical transmembrane segment at 460–480 (VFLQIGVATAVIAVLMLLTAP) threads the bilayer. Residues 481-500 (KLHRMTQDDAADKAAKAAVA) lie on the Cytoplasmic side of the membrane.

Belongs to the major facilitator superfamily. Proton-dependent oligopeptide transporter (POT/PTR) (TC 2.A.17) family. DtpA subfamily. In terms of assembly, monomer. Has a crown-like structure with a diameter of 8 nm and a central density.

The protein resides in the cell inner membrane. Proton-dependent permease that transports di- and tripeptides as well as structurally related peptidomimetics such as aminocephalosporins into the cell. Has a clear preference for dipeptides and tripeptides composed of L-amino acids, and discriminates dipeptides on the basis of the position of charges within the substrate. This is Dipeptide and tripeptide permease A (dtpA) from Escherichia coli (strain K12).